Here is a 391-residue protein sequence, read N- to C-terminus: Ribonucleoside-diphosphate reductase small chain (391 aa).

Fe cation contacts are provided by D135, E166, and H169. Residue Y173 is part of the active site. Fe cation contacts are provided by E229, E263, and H266.

This sequence belongs to the ribonucleoside diphosphate reductase small chain family. In terms of assembly, heterodimer of a large and a small subunit. It depends on Fe cation as a cofactor.

The protein localises to the nucleus. Its subcellular location is the cytoplasm. It carries out the reaction a 2'-deoxyribonucleoside 5'-diphosphate + [thioredoxin]-disulfide + H2O = a ribonucleoside 5'-diphosphate + [thioredoxin]-dithiol. Its function is as follows. Provides the precursors necessary for DNA synthesis. Catalyzes the biosynthesis of deoxyribonucleotides from the corresponding ribonucleotides. The protein is Ribonucleoside-diphosphate reductase small chain (suc22) of Schizosaccharomyces pombe (strain 972 / ATCC 24843) (Fission yeast).